The following is an 83-amino-acid chain: Mitochondrial import inner membrane translocase subunit Tim8 (83 aa).

The short motif at 35–60 (CWDVCFSDYRPPSKMDGKTQTCIQNC) is the Twin CX3C motif element. Disulfide bonds link Cys35–Cys60 and Cys39–Cys56.

Belongs to the small Tim family. In terms of assembly, heterohexamer; composed of 3 copies of ddp-1/tim-8 and 3 copies of tin-13/tim-13, named soluble 70 kDa complex. Associates with the TIM22 complex, whose core is composed of tim-22.

The protein localises to the mitochondrion inner membrane. Functionally, mitochondrial intermembrane chaperone that participates in the import and insertion of some multi-pass transmembrane proteins into the mitochondrial inner membrane. Also required for the transfer of beta-barrel precursors from the TOM complex to the sorting and assembly machinery (SAM complex) of the outer membrane. Acts as a chaperone-like protein that protects the hydrophobic precursors from aggregation and guide them through the mitochondrial intermembrane space. The ddp-1/tim-8-tim-13 complex mediates the import of some proteins while the predominant tim-9/tin-9.1-tim-10/tin-10 70 kDa complex mediates the import of much more proteins. The chain is Mitochondrial import inner membrane translocase subunit Tim8 from Caenorhabditis briggsae.